The chain runs to 1066 residues: TBC1 domain family member 31 (1066 aa).

WD repeat units lie at residues 33-74 (HNTS…LHGN), 75-116 (RFNL…TVTK), 117-157 (ELVS…LDTF), 158-200 (QRKR…CDTL), 201-248 (FCKY…ARQL), 249-296 (FRII…MQTC), and 297-334 (KLLFEIGSLDEGISSSAISPHGRYIASIMENGSLNIYS). The Rab-GAP TBC domain maps to 424-599 (EYPTKYRMFI…KLFDNIFSNH (176 aa)). Coiled coils occupy residues 728 to 861 (QKQE…DLEE) and 914 to 948 (NKCYQEVAKLLRENRRKEIEIINAMVEEEAKKWKE). Over residues 989–998 (CHKEEPRFQN) the composition is skewed to basic and acidic residues. The interval 989–1020 (CHKEEPRFQNEQDSSCLPRTSQLNDSSEMDPS) is disordered. Positions 999 to 1020 (EQDSSCLPRTSQLNDSSEMDPS) are enriched in polar residues. Positions 1053 to 1056 (RARH) are mediates direct interaction with PJA2.

As to quaternary structure, interacts with PJA2; the interaction is direct and recruits PJA2 to centrosomes. Interacts with OFD1; regulates its activity in cilium assembly. Interacts with PRKACA.

It localises to the cytoplasm. Its subcellular location is the cytoskeleton. The protein localises to the microtubule organizing center. The protein resides in the centrosome. It is found in the centriolar satellite. It localises to the cilium basal body. Its function is as follows. Molecular adapter which is involved in cilium biogenesis. Part of a functional complex including OFD1 a centriolar protein involved in cilium assembly. Could regulate the cAMP-dependent phosphorylation of OFD1, and its subsequent ubiquitination by PJA2 which ultimately leads to its proteasomal degradation. In Homo sapiens (Human), this protein is TBC1 domain family member 31.